The primary structure comprises 292 residues: Acetylglutamate kinase (292 aa).

Residues 64-65 (GG), Arg86, and Asn190 contribute to the substrate site.

It belongs to the acetylglutamate kinase family. ArgB subfamily.

Its subcellular location is the cytoplasm. The enzyme catalyses N-acetyl-L-glutamate + ATP = N-acetyl-L-glutamyl 5-phosphate + ADP. It participates in amino-acid biosynthesis; L-arginine biosynthesis; N(2)-acetyl-L-ornithine from L-glutamate: step 2/4. Catalyzes the ATP-dependent phosphorylation of N-acetyl-L-glutamate. This is Acetylglutamate kinase from Geobacter sulfurreducens (strain ATCC 51573 / DSM 12127 / PCA).